Consider the following 816-residue polypeptide: Lon protease (816 aa).

The Lon N-terminal domain maps to 40 to 244 (VPLIAVPSHP…KVLELLYEEL (205 aa)). 398-405 (GPPGVGKT) is an ATP binding site. Residues 636 to 816 (AMSPGMVMGL…SMKEVIKLLF (181 aa)) form the Lon proteolytic domain. Active-site residues include S724 and K767.

This sequence belongs to the peptidase S16 family. As to quaternary structure, homohexamer. Organized in a ring with a central cavity.

It is found in the cytoplasm. It carries out the reaction Hydrolysis of proteins in presence of ATP.. Functionally, ATP-dependent serine protease that mediates the selective degradation of mutant and abnormal proteins as well as certain short-lived regulatory proteins. Required for cellular homeostasis and for survival from DNA damage and developmental changes induced by stress. Degrades polypeptides processively to yield small peptide fragments that are 5 to 10 amino acids long. Binds to DNA in a double-stranded, site-specific manner. This chain is Lon protease, found in Borrelia duttonii (strain Ly).